The sequence spans 333 residues: PDZ domain-containing protein GIPC1 (333 aa).

Positions 1-11 are enriched in basic residues; that stretch reads MPLGLGRRKKA. A disordered region spans residues 1–54; that stretch reads MPLGLGRRKKAPPLVENEEAEPGRGGLGVGEPGPLGGGGSGGPQMGLPPPPPAL. The span at 23-44 shows a compositional bias: gly residues; the sequence is GRGGLGVGEPGPLGGGGSGGPQ. The residue at position 68 (serine 68) is a Phosphoserine. Residues 133-213 form the PDZ domain; sequence EVEVFKSEDA…GRTFTLKLTE (81 aa). A phosphoserine mark is found at serine 222, serine 225, and serine 232. The disordered stretch occupies residues 223 to 244; that stretch reads QRSAGGRPGSGPQLGTGRGTLR. Positions 228–240 are enriched in gly residues; that stretch reads GRPGSGPQLGTGR. Phosphothreonine is present on threonine 242. At serine 247 the chain carries Phosphoserine.

It belongs to the GIPC family. In terms of assembly, interacts with GLUT1 (C-terminus), ACTN1, KIF1B, MYO6, PLEKHG5, SDC4/syndecan-4 and SEMA4C/semaphorin-4C. Interacts with RGS19 C-terminus. Interacts with HTLV-I Tax through the PDZ domain. Widely expressed. Expressed in skeletal muscle (at protein level).

The protein localises to the cytoplasm. The protein resides in the membrane. May be involved in G protein-linked signaling. The polypeptide is PDZ domain-containing protein GIPC1 (GIPC1) (Homo sapiens (Human)).